A 968-amino-acid chain; its full sequence is RNA polymerase-associated protein RapA (968 aa).

The Helicase ATP-binding domain maps to 164 to 334 (DVGRRHAPRV…FARLRLLDPN (171 aa)). 177-184 (DEVGLGKT) contacts ATP. Positions 280–283 (DEAH) match the DEAH box motif. The Helicase C-terminal domain maps to 490–662 (RVEWLMGYLT…YLASPDQTEG (173 aa)).

The protein belongs to the SNF2/RAD54 helicase family. RapA subfamily. Interacts with the RNAP. Has a higher affinity for the core RNAP than for the holoenzyme. Its ATPase activity is stimulated by binding to RNAP.

Its function is as follows. Transcription regulator that activates transcription by stimulating RNA polymerase (RNAP) recycling in case of stress conditions such as supercoiled DNA or high salt concentrations. Probably acts by releasing the RNAP, when it is trapped or immobilized on tightly supercoiled DNA. Does not activate transcription on linear DNA. Probably not involved in DNA repair. This is RNA polymerase-associated protein RapA from Escherichia coli O9:H4 (strain HS).